A 755-amino-acid chain; its full sequence is Tryptophan 2-monooxygenase (755 aa).

The FMN site is built by Ser247, Glu267, Lys275, and Arg295. Arg295 contributes to the substrate binding site.

The protein belongs to the tryptophan 2-monooxygenase family. FMN serves as cofactor.

The enzyme catalyses L-tryptophan + O2 = indole-3-acetamide + CO2 + H2O. It functions in the pathway plant hormone metabolism; auxin biosynthesis. This Agrobacterium vitis (Rhizobium vitis) protein is Tryptophan 2-monooxygenase (iaaM).